Here is a 146-residue protein sequence, read N- to C-terminus: Hemoglobin subunit beta (146 aa).

Residues 2–146 form the Globin domain; that stretch reads HWTETERATI…VVAALSREYH (145 aa). 2 residues coordinate heme b: histidine 63 and histidine 92.

Belongs to the globin family. Heterotetramer of two alpha chains and two beta chains (an easy dimerization is also reported). As to expression, red blood cells.

Involved in oxygen transport from the lung to the various peripheral tissues. The chain is Hemoglobin subunit beta (HBB) from Latimeria chalumnae (Coelacanth).